The chain runs to 283 residues: Thymidylate synthase (283 aa).

Arg-22 contributes to the dUMP binding site. Cys-160 acts as the Nucleophile in catalysis. DUMP contacts are provided by residues 180 to 183 (RSCD), Asn-191, and 221 to 223 (HIY). Residue Asp-183 participates in (6R)-5,10-methylene-5,6,7,8-tetrahydrofolate binding. A (6R)-5,10-methylene-5,6,7,8-tetrahydrofolate-binding site is contributed by Ser-282.

This sequence belongs to the thymidylate synthase family. Bacterial-type ThyA subfamily. In terms of assembly, homodimer.

It is found in the cytoplasm. It catalyses the reaction dUMP + (6R)-5,10-methylene-5,6,7,8-tetrahydrofolate = 7,8-dihydrofolate + dTMP. It functions in the pathway pyrimidine metabolism; dTTP biosynthesis. In terms of biological role, catalyzes the reductive methylation of 2'-deoxyuridine-5'-monophosphate (dUMP) to 2'-deoxythymidine-5'-monophosphate (dTMP) while utilizing 5,10-methylenetetrahydrofolate (mTHF) as the methyl donor and reductant in the reaction, yielding dihydrofolate (DHF) as a by-product. This enzymatic reaction provides an intracellular de novo source of dTMP, an essential precursor for DNA biosynthesis. This Shewanella pealeana (strain ATCC 700345 / ANG-SQ1) protein is Thymidylate synthase.